The following is a 310-amino-acid chain: MLRSHCMEFSEELKTLKDQVRFDGSFRTGTFSNIVIAGMGGSGIAGRIFSEMYSAKPVFVCDDYHIPEFVDGNTEFIAVSYSGNTEETLSAAEEAIKKGAKVHAITSGGRLSEMGVDTIKIPGGLQPRSAVGYLTMPIINTFIRPKHEDIEEAAGLLSDLDKNNTVQENIATEIYAGRRIPVIYGSTPYRSVAYRWKTQFNENAKILAYSNYFSELNHNDTMPLRDTYRKDEFYFMAFDSTDERIRKRIEVTQKITGTSFKKIEARGSSLIARIFYLIHFGDYVTYHLARIRNVDPQDVSAIEDLKKRIS.

In terms of domain architecture, SIS spans 22–152; sequence FDGSFRTGTF…IRPKHEDIEE (131 aa). Residues glycine 41, serine 42, serine 80, serine 82, threonine 85, and arginine 128 each contribute to the D-fructose 6-phosphate site. Glutamate 202 (proton acceptor) is an active-site residue. The D-fructose 6-phosphate site is built by histidine 218 and lysine 306. Histidine 218 functions as the Proton donor in the catalytic mechanism. Lysine 306 serves as the catalytic Proton acceptor.

The protein belongs to the PGI/PMI family. Homodimer.

The enzyme catalyses alpha-D-glucose 6-phosphate = beta-D-fructose 6-phosphate. The catalysed reaction is D-mannose 6-phosphate = D-fructose 6-phosphate. Its activity is regulated as follows. Inhibited by low concentrations of erythrose 4-phosphate and 6-phosphogluconate. Functionally, dual specificity isomerase that catalyzes the isomerization of both glucose-6-phosphate and mannose-6-phosphate to fructose-6-phosphate with similar catalytic efficiency. The chain is Bifunctional phosphoglucose/phosphomannose isomerase from Thermoplasma acidophilum (strain ATCC 25905 / DSM 1728 / JCM 9062 / NBRC 15155 / AMRC-C165).